A 111-amino-acid polypeptide reads, in one-letter code: Large ribosomal subunit protein uL24 (111 aa).

It belongs to the universal ribosomal protein uL24 family. As to quaternary structure, part of the 50S ribosomal subunit.

In terms of biological role, one of two assembly initiator proteins, it binds directly to the 5'-end of the 23S rRNA, where it nucleates assembly of the 50S subunit. Its function is as follows. One of the proteins that surrounds the polypeptide exit tunnel on the outside of the subunit. The polypeptide is Large ribosomal subunit protein uL24 (Heliobacterium modesticaldum (strain ATCC 51547 / Ice1)).